Consider the following 318-residue polypeptide: L-lactate dehydrogenase (318 aa).

Residues Val-18, Asp-39, Lys-44, Tyr-69, and 83-84 contribute to the NAD(+) site; that span reads GA. Residues Gln-86 and Arg-92 each contribute to the substrate site. Residues Ser-105, 122–124, and Ser-147 contribute to the NAD(+) site; that span reads VSN. 124–127 lines the substrate pocket; that stretch reads NPVD. 152 to 155 lines the substrate pocket; it reads DTSR. His-179 serves as the catalytic Proton acceptor. Tyr-225 carries the post-translational modification Phosphotyrosine. Thr-234 contributes to the substrate binding site.

The protein belongs to the LDH/MDH superfamily. LDH family. In terms of assembly, homotetramer.

Its subcellular location is the cytoplasm. It catalyses the reaction (S)-lactate + NAD(+) = pyruvate + NADH + H(+). It functions in the pathway fermentation; pyruvate fermentation to lactate; (S)-lactate from pyruvate: step 1/1. In terms of biological role, catalyzes the conversion of lactate to pyruvate. The protein is L-lactate dehydrogenase of Clostridium botulinum (strain Loch Maree / Type A3).